Consider the following 132-residue polypeptide: Small ribosomal subunit protein uS8 (132 aa).

This sequence belongs to the universal ribosomal protein uS8 family. Part of the 30S ribosomal subunit. Contacts proteins S5 and S12.

One of the primary rRNA binding proteins, it binds directly to 16S rRNA central domain where it helps coordinate assembly of the platform of the 30S subunit. The sequence is that of Small ribosomal subunit protein uS8 from Francisella philomiragia subsp. philomiragia (strain ATCC 25017 / CCUG 19701 / FSC 153 / O#319-036).